We begin with the raw amino-acid sequence, 311 residues long: MNAVMSLKGRDFLTLLDFSTEEILDLLALAADLKAKQKAGVSYTPLSGKTMAMIFEKPSGTRVSFEVGMIQLGGQAMYLNGNHLQLGRGETIADTARVLSQYVRVIMIRTFAHQKVEELAEYASFRSSNGLTDDDHPCQALADLLTIYEVKKTFQGVKLAYVGDGNNVANALLVAAAKVGMDVAIACPPGYEPKKEYVEAACRVGEQTGRRVTVTHDPLVAVAGADRIYTDVWTSMGQESESSERLQVFQPYQVNEELVKAAKPDYLFLHCLPAHRGEEVTAGVMDGPNSVVFEQAGNRLHAQKAILLSVL.

Carbamoyl phosphate contacts are provided by residues glutamine 85, arginine 109, and 136–139 (HPCQ). L-ornithine contacts are provided by residues asparagine 167, aspartate 231, and 235 to 236 (SM). Carbamoyl phosphate contacts are provided by residues 271–272 (CL) and arginine 299.

Belongs to the aspartate/ornithine carbamoyltransferase superfamily. OTCase family.

It localises to the cytoplasm. The catalysed reaction is carbamoyl phosphate + L-ornithine = L-citrulline + phosphate + H(+). It participates in amino-acid biosynthesis; L-arginine biosynthesis; L-arginine from L-ornithine and carbamoyl phosphate: step 1/3. Functionally, reversibly catalyzes the transfer of the carbamoyl group from carbamoyl phosphate (CP) to the N(epsilon) atom of ornithine (ORN) to produce L-citrulline. The chain is Ornithine carbamoyltransferase (argF) from Geobacillus stearothermophilus (Bacillus stearothermophilus).